A 223-amino-acid polypeptide reads, in one-letter code: Small ribosomal subunit protein uS5 (223 aa).

Low complexity predominate over residues 1–15; it reads MTEAVAAEATETAPA. The interval 1-51 is disordered; sequence MTEAVAAEATETAPATDDRRGGRRGERGDRGQGRGDRGGRGGRDGGREAEK. Residues 16–51 are compositionally biased toward basic and acidic residues; the sequence is TDDRRGGRRGERGDRGQGRGDRGGRGGRDGGREAEK. Residues 54 to 117 form the S5 DRBM domain; the sequence is FVERVVTINR…EEAKKSFFRV (64 aa).

It belongs to the universal ribosomal protein uS5 family. As to quaternary structure, part of the 30S ribosomal subunit. Contacts proteins S4 and S8.

With S4 and S12 plays an important role in translational accuracy. Its function is as follows. Located at the back of the 30S subunit body where it stabilizes the conformation of the head with respect to the body. This is Small ribosomal subunit protein uS5 from Paenarthrobacter aurescens (strain TC1).